The following is a 359-amino-acid chain: Chorismate synthase (359 aa).

NADP(+) is bound at residue Arg47. FMN-binding positions include 123–125 (RSS), Gly283, 298–302 (KPTSS), and Arg326.

Belongs to the chorismate synthase family. Homotetramer. Requires FMNH2 as cofactor.

The enzyme catalyses 5-O-(1-carboxyvinyl)-3-phosphoshikimate = chorismate + phosphate. Its pathway is metabolic intermediate biosynthesis; chorismate biosynthesis; chorismate from D-erythrose 4-phosphate and phosphoenolpyruvate: step 7/7. Its function is as follows. Catalyzes the anti-1,4-elimination of the C-3 phosphate and the C-6 proR hydrogen from 5-enolpyruvylshikimate-3-phosphate (EPSP) to yield chorismate, which is the branch point compound that serves as the starting substrate for the three terminal pathways of aromatic amino acid biosynthesis. This reaction introduces a second double bond into the aromatic ring system. This chain is Chorismate synthase, found in Chlamydia abortus (strain DSM 27085 / S26/3) (Chlamydophila abortus).